Consider the following 171-residue polypeptide: Phosphopantetheine adenylyltransferase (171 aa).

T10 provides a ligand contact to substrate. ATP is bound by residues T10–F11 and H18. Substrate contacts are provided by K42, T74, and R88. ATP contacts are provided by residues G89 to R91, E99, and W124 to K130.

This sequence belongs to the bacterial CoaD family. Homohexamer. Mg(2+) serves as cofactor.

It is found in the cytoplasm. It carries out the reaction (R)-4'-phosphopantetheine + ATP + H(+) = 3'-dephospho-CoA + diphosphate. Its pathway is cofactor biosynthesis; coenzyme A biosynthesis; CoA from (R)-pantothenate: step 4/5. Its function is as follows. Reversibly transfers an adenylyl group from ATP to 4'-phosphopantetheine, yielding dephospho-CoA (dPCoA) and pyrophosphate. The chain is Phosphopantetheine adenylyltransferase from Blochmanniella pennsylvanica (strain BPEN).